The chain runs to 330 residues: Methionyl-tRNA formyltransferase (330 aa).

(6S)-5,6,7,8-tetrahydrofolate is bound at residue 121 to 124 (SLLP).

This sequence belongs to the Fmt family.

It catalyses the reaction L-methionyl-tRNA(fMet) + (6R)-10-formyltetrahydrofolate = N-formyl-L-methionyl-tRNA(fMet) + (6S)-5,6,7,8-tetrahydrofolate + H(+). In terms of biological role, attaches a formyl group to the free amino group of methionyl-tRNA(fMet). The formyl group appears to play a dual role in the initiator identity of N-formylmethionyl-tRNA by promoting its recognition by IF2 and preventing the misappropriation of this tRNA by the elongation apparatus. This is Methionyl-tRNA formyltransferase from Burkholderia cenocepacia (strain HI2424).